The chain runs to 334 residues: Methionine adenosyltransferase 2 subunit beta (334 aa).

NADP(+)-binding positions include 37–40, 60–62, 71–72, C93, R97, Y159, and L185; these read TGLL, YSR, and NL. The required for interaction with MAT2A stretch occupies residues 319 to 334; sequence LWPFLVDKRWRQTVFH.

This sequence belongs to the dTDP-4-dehydrorhamnose reductase family. MAT2B subfamily. In terms of assembly, heterotrimer; composed of a catalytic mat2a homodimer that binds one regulatory mat2b chain. Heterohexamer; composed of a central, catalytic mat2a homotetramer flanked on either side by a regulatory mat2b chain. NADP binding increases the affinity for mat2a.

The protein operates within amino-acid biosynthesis; S-adenosyl-L-methionine biosynthesis; S-adenosyl-L-methionine from L-methionine: step 1/1. Its function is as follows. Regulatory subunit of S-adenosylmethionine synthetase 2, an enzyme that catalyzes the formation of S-adenosylmethionine from methionine and ATP. Regulates MAT2A catalytic activity by changing its kinetic properties, increasing its affinity for L-methionine. Can bind NADP (in vitro). The sequence is that of Methionine adenosyltransferase 2 subunit beta (mat2b) from Xenopus tropicalis (Western clawed frog).